The chain runs to 152 residues: Transcriptional regulator MraZ (152 aa).

SpoVT-AbrB domains lie at 5 to 52 (ASAI…PIHE) and 81 to 124 (AHEV…DEQA).

It belongs to the MraZ family. In terms of assembly, forms oligomers.

It localises to the cytoplasm. The protein localises to the nucleoid. The protein is Transcriptional regulator MraZ of Shewanella oneidensis (strain ATCC 700550 / JCM 31522 / CIP 106686 / LMG 19005 / NCIMB 14063 / MR-1).